The chain runs to 132 residues: Large ribosomal subunit protein uL14 (132 aa).

Belongs to the universal ribosomal protein uL14 family. Part of the 50S ribosomal subunit. Forms a cluster with proteins L3 and L24e, part of which may contact the 16S rRNA in 2 intersubunit bridges.

Binds to 23S rRNA. Forms part of two intersubunit bridges in the 70S ribosome. The sequence is that of Large ribosomal subunit protein uL14 from Thermoplasma volcanium (strain ATCC 51530 / DSM 4299 / JCM 9571 / NBRC 15438 / GSS1).